Consider the following 188-residue polypeptide: SRP-independent targeting protein 3 (188 aa).

The helical transmembrane segment at 27–47 (TIIMYIRILYCSSIGISWIIY) threads the bilayer. Ser157 carries the post-translational modification Phosphoserine. A disordered region spans residues 157–188 (SLFGGMGQTGPKTDKKSIEEAERAGNAGVKAE). Basic and acidic residues predominate over residues 168–179 (KTDKKSIEEAER).

This sequence belongs to the PHO88 family. Interacts with ENV10/SND2. ENV10/SND2 and PHO88/SND3 form a complex with the translocon in the endoplasmic reticulum membrane.

Its subcellular location is the endoplasmic reticulum membrane. The protein resides in the mitochondrion. Functionally, functions in the SND pathway, a SRP (signal recognition particle) and GET (guided entry of tail-anchored proteins) independent pathway for targeting a broad range of substrate proteins to the endoplasmic reticulum. SND functions in parallel to GET in targeting proteins with downstream hydrophobic motifs. Involved in inorganic phosphate uptake. Also involved in telomere length regulation and maintenance. The protein is SRP-independent targeting protein 3 of Saccharomyces cerevisiae (strain ATCC 204508 / S288c) (Baker's yeast).